A 404-amino-acid chain; its full sequence is Alkane 1-monooxygenase 1 (404 aa).

Transmembrane regions (helical) follow at residues 25-45, 47-67, 94-114, and 119-139; these read HLWI…YLVS, TGWS…VPLI, VLTY…AWWV, and IGVF…GLAL. The Fe cation site is built by His-143 and His-147. The chain crosses the membrane as a helical span at residues 151-171; it reads TFDRWMAKLVLAVVGYGHFFI. Positions 173, 177, and 178 each coordinate Fe cation. The chain crosses the membrane as a helical span at residues 241 to 261; it reads VVLYAALLAFFGPLMLIFLPI. His-317, His-320, and His-321 together coordinate Fe cation.

The protein belongs to the fatty acid desaturase type 1 family. AlkB subfamily. Fe(3+) serves as cofactor.

The protein resides in the cell inner membrane. It carries out the reaction octane + 2 reduced [rubredoxin] + O2 + 2 H(+) = 2 oxidized [rubredoxin] + octan-1-ol + H2O. It participates in hydrocarbon metabolism; alkane degradation. In terms of biological role, catalyzes the hydroxylation of n-alkanes and fatty acids in the presence of a NADH-rubredoxin reductase and rubredoxin. It preferably hydroxylases C5-C12 hydrocarbons. This is Alkane 1-monooxygenase 1 (alkB1) from Alcanivorax borkumensis (strain ATCC 700651 / DSM 11573 / NCIMB 13689 / SK2).